The following is a 466-amino-acid chain: 3-isopropylmalate dehydratase large subunit (466 aa).

The [4Fe-4S] cluster site is built by cysteine 347, cysteine 408, and cysteine 411.

Belongs to the aconitase/IPM isomerase family. LeuC type 1 subfamily. As to quaternary structure, heterodimer of LeuC and LeuD. It depends on [4Fe-4S] cluster as a cofactor.

It catalyses the reaction (2R,3S)-3-isopropylmalate = (2S)-2-isopropylmalate. It participates in amino-acid biosynthesis; L-leucine biosynthesis; L-leucine from 3-methyl-2-oxobutanoate: step 2/4. In terms of biological role, catalyzes the isomerization between 2-isopropylmalate and 3-isopropylmalate, via the formation of 2-isopropylmaleate. This is 3-isopropylmalate dehydratase large subunit from Herminiimonas arsenicoxydans.